The following is a 159-amino-acid chain: Ribosomal RNA large subunit methyltransferase H (159 aa).

S-adenosyl-L-methionine-binding positions include leucine 76, glycine 108, and 127–132 (FGLLTL).

Belongs to the RNA methyltransferase RlmH family. Homodimer.

Its subcellular location is the cytoplasm. It catalyses the reaction pseudouridine(1915) in 23S rRNA + S-adenosyl-L-methionine = N(3)-methylpseudouridine(1915) in 23S rRNA + S-adenosyl-L-homocysteine + H(+). Its function is as follows. Specifically methylates the pseudouridine at position 1915 (m3Psi1915) in 23S rRNA. This is Ribosomal RNA large subunit methyltransferase H from Streptococcus pyogenes serotype M3 (strain SSI-1).